The primary structure comprises 402 residues: UDP-glucose 6-dehydrogenase (402 aa).

NAD(+)-binding positions include 2 to 19 (KIAV…GVLL), Val-11, Asp-29, Lys-34, Thr-83, Thr-118, and Glu-145. Substrate is bound by residues 141–145 (EFLRE), Lys-204, Asn-208, 249–253 (YNNPS), and Gly-257. Tyr-259 is a binding site for NAD(+). Catalysis depends on Cys-260, which acts as the Nucleophile. Residue Lys-263 participates in NAD(+) binding. Substrate is bound at residue Lys-320. Arg-327 is an NAD(+) binding site.

The protein belongs to the UDP-glucose/GDP-mannose dehydrogenase family.

The enzyme catalyses UDP-alpha-D-glucose + 2 NAD(+) + H2O = UDP-alpha-D-glucuronate + 2 NADH + 3 H(+). It participates in nucleotide-sugar biosynthesis; UDP-alpha-D-glucuronate biosynthesis; UDP-alpha-D-glucuronate from UDP-alpha-D-glucose: step 1/1. Functionally, catalyzes the formation of UDP-glucuronic acid which is required for capsular hyaluronic acid synthesis. The chain is UDP-glucose 6-dehydrogenase (hasB) from Streptococcus pyogenes serotype M18 (strain MGAS8232).